Consider the following 640-residue polypeptide: Calpain-5 (640 aa).

A Calpain catalytic domain is found at 26 to 343; it reads LFEDPLFPAT…FTDIIKCRLI (318 aa). Catalysis depends on residues Cys-81, His-252, and Asn-284. The interval 344 to 496 is domain III; the sequence is NTSYLSIHKT…VFTDVPSNCR (153 aa). A C2 domain is found at 499–617; sequence RLDEPPRTCW…HTLHLQDRSS (119 aa).

The protein belongs to the peptidase C2 family.

Calcium-regulated non-lysosomal thiol-protease. In Mus musculus (Mouse), this protein is Calpain-5 (Capn5).